We begin with the raw amino-acid sequence, 1342 residues long: DNA-directed RNA polymerase subunit beta (1342 aa).

The protein belongs to the RNA polymerase beta chain family. As to quaternary structure, the RNAP catalytic core consists of 2 alpha, 1 beta, 1 beta' and 1 omega subunit. When a sigma factor is associated with the core the holoenzyme is formed, which can initiate transcription.

The enzyme catalyses RNA(n) + a ribonucleoside 5'-triphosphate = RNA(n+1) + diphosphate. In terms of biological role, DNA-dependent RNA polymerase catalyzes the transcription of DNA into RNA using the four ribonucleoside triphosphates as substrates. The sequence is that of DNA-directed RNA polymerase subunit beta from Serratia proteamaculans (strain 568).